Here is a 340-residue protein sequence, read N- to C-terminus: Dual specificity protein phosphatase 12 (340 aa).

Met1 carries the N-acetylmethionine modification. The Tyrosine-protein phosphatase domain maps to 26–171; that stretch reads QMLEVQPGLY…LKLYQAMGYE (146 aa). Cys115 acts as the Phosphocysteine intermediate in catalysis. A substrate-binding site is contributed by 116 to 121; that stretch reads HAGVSR. Ser335 carries the phosphoserine modification.

This sequence belongs to the protein-tyrosine phosphatase family. Non-receptor class dual specificity subfamily. As to quaternary structure, monomer. It depends on Zn(2+) as a cofactor. As to expression, ubiquitous, highest expression in spleen, testis, ovary, and peripheral blood leukocytes and lower expression in liver and lung.

It localises to the nucleus. The protein localises to the cytoplasm. The protein resides in the cytosol. The catalysed reaction is O-phospho-L-tyrosyl-[protein] + H2O = L-tyrosyl-[protein] + phosphate. It carries out the reaction O-phospho-L-seryl-[protein] + H2O = L-seryl-[protein] + phosphate. It catalyses the reaction O-phospho-L-threonyl-[protein] + H2O = L-threonyl-[protein] + phosphate. Functionally, dual specificity phosphatase; can dephosphorylate both phosphotyrosine and phosphoserine or phosphothreonine residues. Can dephosphorylate glucokinase (in vitro). Has phosphatase activity with the synthetic substrate 6,8-difluoro-4-methylumbelliferyl phosphate and other in vitro substrates. The protein is Dual specificity protein phosphatase 12 (DUSP12) of Homo sapiens (Human).